We begin with the raw amino-acid sequence, 417 residues long: Serine hydroxymethyltransferase (417 aa).

(6S)-5,6,7,8-tetrahydrofolate contacts are provided by residues Leu-120 and 124–126 (GHL). At Lys-229 the chain carries N6-(pyridoxal phosphate)lysine.

This sequence belongs to the SHMT family. As to quaternary structure, homodimer. Pyridoxal 5'-phosphate serves as cofactor.

The protein localises to the cytoplasm. It carries out the reaction (6R)-5,10-methylene-5,6,7,8-tetrahydrofolate + glycine + H2O = (6S)-5,6,7,8-tetrahydrofolate + L-serine. Its pathway is one-carbon metabolism; tetrahydrofolate interconversion. It participates in amino-acid biosynthesis; glycine biosynthesis; glycine from L-serine: step 1/1. Functionally, catalyzes the reversible interconversion of serine and glycine with tetrahydrofolate (THF) serving as the one-carbon carrier. This reaction serves as the major source of one-carbon groups required for the biosynthesis of purines, thymidylate, methionine, and other important biomolecules. Also exhibits THF-independent aldolase activity toward beta-hydroxyamino acids, producing glycine and aldehydes, via a retro-aldol mechanism. The polypeptide is Serine hydroxymethyltransferase (Anaeromyxobacter sp. (strain K)).